A 726-amino-acid chain; its full sequence is E3 SUMO-protein ligase SIZ2 (726 aa).

The SAP domain occupies 43–77 (MEQLKVLELKQICKSLDLSITGKKAVLQDRIKQFL). The PINIT domain occupies 139–291 (TALPPYSQQQ…SISCFIVEVF (153 aa)). The SP-RING-type zinc-finger motif lies at 323 to 408 (DDDDIITTST…IQNCNEDVEQ (86 aa)). Residues C354, H356, C377, and C380 each contribute to the Zn(2+) site. Residues 507–533 (PSESEGSSDYNPNHTSTPKGSPTMDQD) are disordered. The segment covering 510–533 (SEGSSDYNPNHTSTPKGSPTMDQD) has biased composition (polar residues).

The protein belongs to the PIAS family. As to quaternary structure, interacts with CDC12. Post-translationally, autosumoylated upon ethanol stress.

The protein localises to the nucleus. It participates in protein modification; protein sumoylation. May act as an E3 ligase mediating SUMO/Smt3 attachment to septins. May be involved in chromosome maintenance. The sequence is that of E3 SUMO-protein ligase SIZ2 (NFI1) from Saccharomyces cerevisiae (strain ATCC 204508 / S288c) (Baker's yeast).